Here is a 267-residue protein sequence, read N- to C-terminus: MSTKLRYLHHPASQPCRAVHQFMLENNIEFQEEIVDITTDINEQPEFRERYNPTGQVPILVDGDFTIWESAAIVYYLSEKYDCSSSWWGSTLEERGHIQQYMHWYAYTLRLGGGAFHWTIFAPMIYGYDKDFTVEVTKGRFLLYESFDILEKYWLKDGDYLCGNTLSYPDLATCQDLVSHDAGRIIPTSMWDSHPKVKAWFARMMDREHAKTVSAWQYENVRKYLDDGVKLNFQRKTAVLKGTEVYSGHNNGIIYNGDDDSFVTQHG.

A GST N-terminal domain is found at 3–85 (TKLRYLHHPA…YLSEKYDCSS (83 aa)). Residues 91-224 (TLEERGHIQQ…AWQYENVRKY (134 aa)) enclose the GST C-terminal domain.

Belongs to the GST superfamily. As to quaternary structure, homohexamer.

It is found in the cytoplasm. The catalysed reaction is dichloromethane + H2O = formaldehyde + 2 chloride + 2 H(+). It participates in xenobiotic degradation; dichloromethane degradation. This Methylophilus leisingeri (strain DSM 6813 / VKM B-2013 / DM11) protein is Dichloromethane dehalogenase (dcmA).